A 418-amino-acid chain; its full sequence is 3-isopropylmalate dehydratase large subunit (418 aa).

Positions 298, 358, and 361 each coordinate [4Fe-4S] cluster.

It belongs to the aconitase/IPM isomerase family. LeuC type 2 subfamily. As to quaternary structure, heterodimer of LeuC and LeuD. The cofactor is [4Fe-4S] cluster.

The catalysed reaction is (2R,3S)-3-isopropylmalate = (2S)-2-isopropylmalate. It functions in the pathway amino-acid biosynthesis; L-leucine biosynthesis; L-leucine from 3-methyl-2-oxobutanoate: step 2/4. Catalyzes the isomerization between 2-isopropylmalate and 3-isopropylmalate, via the formation of 2-isopropylmaleate. The protein is 3-isopropylmalate dehydratase large subunit of Caldanaerobacter subterraneus subsp. tengcongensis (strain DSM 15242 / JCM 11007 / NBRC 100824 / MB4) (Thermoanaerobacter tengcongensis).